The sequence spans 186 residues: uncharacterized protein (186 aa).

One can recognise a Cupin type-2 domain in the interval 89-164; that stretch reads LMSLGIGEDI…NTPLKLYSIY (76 aa). 117–124 contacts ATP; the sequence is GIVKMGKS.

This is an uncharacterized protein from Bacillus subtilis (strain 168).